The primary structure comprises 125 residues: Cystatin-like cysteine protease inhibitor EPIC2A (125 aa).

The N-terminal stretch at 1-21 (MSFLRPTLALLAVTALVTTSA) is a signal peptide. Asn45 carries an N-linked (GlcNAc...) asparagine glycan. The Secondary area of contact motif lies at 68–72 (QVVSG).

The protein belongs to the cystatin family.

Its subcellular location is the secreted. Functionally, secreted effector that interacts with and inhibits host apoplastic pathogenesis-related papain-like cysteine proteases. Inhibition of host proteases by a pathogen extracellular protease inhibitor forms a specific type of defense-counterdefense mechanism between plants and microbial pathogens. The polypeptide is Cystatin-like cysteine protease inhibitor EPIC2A (Phytophthora infestans (strain T30-4) (Potato late blight agent)).